The following is a 305-amino-acid chain: Transmembrane epididymal protein 1A (305 aa).

The chain crosses the membrane as a helical span at residues 4–24 (FIGHISPGLFLVFYGLYQAVI). Residue Asn32 is glycosylated (N-linked (GlcNAc...) asparagine). Transmembrane regions (helical) follow at residues 54–74 (IAHA…YEIS), 124–144 (CVLL…LLLV), 159–179 (SLLI…LWAP), 187–207 (IETF…FILF), and 223–243 (IMFV…CMLG). A disordered region spans residues 285-305 (EQQDKDDQAPLLSKISPCDRA).

This sequence belongs to the TMEM45 family.

The protein localises to the membrane. The polypeptide is Transmembrane epididymal protein 1A (Mus musculus (Mouse)).